A 471-amino-acid chain; its full sequence is UDP-glycosyltransferase 71A15 (471 aa).

Residues Ser-282, 348–349 (WA), 366–374 (HCGWNSTLE), and 388–391 (YAEQ) each bind UDP-alpha-D-glucose.

Belongs to the UDP-glycosyltransferase family.

Its function is as follows. Glycosyltransferase that possesses chalcone and flavonol 2'-O-glycosyltransferase activity. Converts phloretin to phlorizin (phloretin 2'-O-glucoside), a potent antioxidant. Possesses glycosyltransferase activity toward, naringenin, naringenin chalcone, eriodictyol, eriodictyol chalcone, apigenin, luteolin, kaempferol, quercetin, isoliquiritigenin, butein and caffeic acid. Can convert phloretin to phloretin 4'-O-glucoside and phloretin 4-O-glucoside. The sequence is that of UDP-glycosyltransferase 71A15 from Malus domestica (Apple).